A 1378-amino-acid chain; its full sequence is Cell surface hyaluronidase (1378 aa).

The tract at residues 1-77 is disordered; it reads MQVNDGPSSH…GNRREQAQNQ (77 aa). The Cytoplasmic portion of the chain corresponds to 1-82; that stretch reads MQVNDGPSSH…QAQNQQRKNT (82 aa). Over residues 36 to 58 the composition is skewed to pro residues; sequence RSPPPAKAPPPPPLKPPVPPPAR. A helical; Signal-anchor for type II membrane protein transmembrane segment spans residues 83–103; sequence YICVGIFFGIFLLILILVLSL. Residues 104 to 1378 are Extracellular-facing; that stretch reads TSKDVLDENC…MDLELLKKIS (1275 aa). In terms of domain architecture, G8 spans 121–247; that stretch reads RSWKPGHDLK…ERMSWTFLTR (127 aa). Asn-171, Asn-264, Asn-360, Asn-527, and Asn-639 each carry an N-linked (GlcNAc...) asparagine glycan. The GG-type lectin 1 domain maps to 257–414; it reads GDHAFQKNFS…YPTTGFQVDA (158 aa). A PbH1 1 repeat occupies 672 to 694; that stretch reads HPNNHLISNSAAGSQDAGIWYVF. A glycan (N-linked (GlcNAc...) asparagine) is linked at Asn-696. A PbH1 2 repeat occupies 714-736; sequence TPLGTFFNNRVHSNFKAGLFIDR. N-linked (GlcNAc...) asparagine glycosylation is found at Asn-742, Asn-854, Asn-905, Asn-996, Asn-1069, Asn-1160, and Asn-1221. A GG-type lectin 2 domain is found at 1203–1363; it reads NSYLQTQIKS…LEEYSCPPKK (161 aa).

Belongs to the CEMIP family. It depends on Ca(2+) as a cofactor.

It is found in the cell membrane. It catalyses the reaction Random hydrolysis of (1-&gt;4)-linkages between N-acetyl-beta-D-glucosamine and D-glucuronate residues in hyaluronate.. Functionally, cell surface hyaluronidase that mediates the initial cleavage of extracellular high-molecular-weight hyaluronan into intermediate-size hyaluronan. Acts as a regulator of angiogenesis in embryos by mediating degradation of extracellular hyaluronan, thereby promoting VEGF signaling. Acts as a regulator of heart development during myocardial and endocardial morphogenesis: involved in the looping stage of heart morphogenesis. Stimulates migration of endocardial cells and increases both myocardial and endocardial fusion. Involved in the restriction of endocardial cushions (ECs) formation to the atrioventricular canal (AVC). Also required for muscle fiber attachment. Is very specific to hyaluronan; not able to cleave chondroitin sulfate or dermatan sulfate. This is Cell surface hyaluronidase (cemip2) from Danio rerio (Zebrafish).